A 291-amino-acid chain; its full sequence is Probable L-ascorbate peroxidase 3, peroxisomal (291 aa).

Residue His-41 is the Proton acceptor of the active site. The disordered stretch occupies residues 114-133 (YVPGRRDSSDSPEEGRLPDA). Over residues 116–133 (PGRRDSSDSPEEGRLPDA) the composition is skewed to basic and acidic residues. Residue His-161 participates in heme b binding. Positions 162, 178, and 185 each coordinate K(+). A helical membrane pass occupies residues 263 to 283 (LLMQTAAGVAVAAAVVAWAYL).

It belongs to the peroxidase family. Ascorbate peroxidase subfamily. It depends on heme b as a cofactor. In terms of tissue distribution, expressed in stems.

It localises to the peroxisome membrane. It catalyses the reaction L-ascorbate + H2O2 = L-dehydroascorbate + 2 H2O. Its function is as follows. Plays a key role in hydrogen peroxide removal. In Oryza sativa subsp. japonica (Rice), this protein is Probable L-ascorbate peroxidase 3, peroxisomal.